A 200-amino-acid chain; its full sequence is Oligoribonuclease (200 aa).

An Exonuclease domain is found at 5 to 169; the sequence is MVWIDCEMTG…ADIRESIAEL (165 aa). Residue Tyr-126 is part of the active site.

Belongs to the oligoribonuclease family.

The protein resides in the cytoplasm. In terms of biological role, 3'-to-5' exoribonuclease specific for small oligoribonucleotides. The sequence is that of Oligoribonuclease from Streptomyces avermitilis (strain ATCC 31267 / DSM 46492 / JCM 5070 / NBRC 14893 / NCIMB 12804 / NRRL 8165 / MA-4680).